The following is a 275-amino-acid chain: MQNNEIIKPAKYFSELEKSILLALVEKYKYVLECKKSDARTIALKQRTWQALAHEYNSQPSVSLRDFKQLKKCWENIKARTKKIMAHERREKVKRSVSPLLSTHVLGKEKIASMLPEQLYFLQSPPEEEPEYHAEAAAQESFAVSNRELCDDEKEFIHFPVCEGTSQPEPSCSAVRITANKNYRSKTSQEGALKKMHEEEHHQQMSILQLQLIQMNEVHVAKIQQIERECEMAEEEHRIKMEVLNKKKMYWERKLQTFTKEWPVSSFNRPFPNSP.

The 66-residue stretch at 13 to 78 (FSELEKSILL…QLKKCWENIK (66 aa)) folds into the Myb-like domain. Residues serine 96 and serine 98 each carry the phosphoserine modification. Lysine 154 participates in a covalent cross-link: Glycyl lysine isopeptide (Lys-Gly) (interchain with G-Cter in SUMO2). A coiled-coil region spans residues 211-247 (QLIQMNEVHVAKIQQIERECEMAEEEHRIKMEVLNKK). At serine 274 the chain carries Phosphoserine.

The protein belongs to the MSANTD3 family.

The chain is Myb/SANT-like DNA-binding domain-containing protein 3 (MSANTD3) from Bos taurus (Bovine).